We begin with the raw amino-acid sequence, 478 residues long: Dihydrolipoyl dehydrogenase (478 aa).

Residues 34–49, lysine 58, and glycine 122 each bind FAD; that span reads EKYIGKEGKVALGGTC. The cysteines at positions 49 and 54 are disulfide-linked. NAD(+) contacts are provided by residues 188 to 192, glutamate 211, valine 245, and 276 to 279; these read GAGVI and AVGR. FAD is bound by residues aspartate 319 and alanine 327. The active-site Proton acceptor is the histidine 451.

This sequence belongs to the class-I pyridine nucleotide-disulfide oxidoreductase family. In terms of assembly, homodimer. FAD is required as a cofactor.

It localises to the cytoplasm. The enzyme catalyses N(6)-[(R)-dihydrolipoyl]-L-lysyl-[protein] + NAD(+) = N(6)-[(R)-lipoyl]-L-lysyl-[protein] + NADH + H(+). Its function is as follows. The branched-chain alpha-keto dehydrogenase complex catalyzes the overall conversion of alpha-keto acids to acyl-CoA and CO(2). It contains multiple copies of 3 enzymatic components: branched-chain alpha-keto acid decarboxylase (E1), lipoamide acyltransferase (E2) and lipoamide dehydrogenase (E3). In terms of biological role, also acts in the glycine cleavage system. The chain is Dihydrolipoyl dehydrogenase (lpdG) from Pseudomonas aeruginosa (strain ATCC 15692 / DSM 22644 / CIP 104116 / JCM 14847 / LMG 12228 / 1C / PRS 101 / PAO1).